A 126-amino-acid chain; its full sequence is SH2 domain-containing protein 1A (126 aa).

An SH2 domain is found at 6–104; sequence VYHGKISRET…VTPLQYPVEK (99 aa). The tract at residues 67 to 92 is interaction with FYN SH3 domain; that stretch reads ETAPGVHKRFFRKVKNLISAFQKPDQ. K89 is modified (N6-acetyllysine). Residues 100–126 form a disordered region; the sequence is YPVEKSSGRGPQAPTGRRDSDICLNAP.

As to quaternary structure, interacts with CD84, CD244, LY9, SLAMF1 and FYN. Interacts with NTRK1, NTRK2 and NTRK3. In terms of tissue distribution, T-cells.

Its subcellular location is the cytoplasm. Cytoplasmic adapter regulating receptors of the signaling lymphocytic activation molecule (SLAM) family such as SLAMF1, CD244, LY9, CD84, SLAMF6 and SLAMF7. In SLAM signaling seems to cooperate with SH2D1B/EAT-2. Initially it has been proposed that association with SLAMF1 prevents SLAMF1 binding to inhibitory effectors including INPP5D/SHIP1 and PTPN11/SHP-2. However, by simultaneous interactions, recruits FYN which subsequently phosphorylates and activates SLAMF1. Positively regulates CD244/2B4- and CD84-mediated natural killer (NK) cell functions. Can also promote CD48-, SLAMF6 -, LY9-, and SLAMF7-mediated NK cell activation. In the context of NK cell-mediated cytotoxicity enhances conjugate formation with target cells. May also regulate the activity of the neurotrophin receptors NTRK1, NTRK2 and NTRK3. The polypeptide is SH2 domain-containing protein 1A (Sh2d1a) (Mus musculus (Mouse)).